The primary structure comprises 633 residues: Carbon monoxide dehydrogenase 2 (633 aa).

5 residues coordinate [4Fe-4S] cluster: Cys44, Cys53, Cys56, Cys61, and Cys73. Positions 264, 343, 453, 484, and 525 each coordinate [Ni-4Fe-5S] cluster.

This sequence belongs to the Ni-containing carbon monoxide dehydrogenase family. Homodimer. [4Fe-4S] cluster is required as a cofactor. The cofactor is [Ni-4Fe-5S] cluster.

The enzyme catalyses CO + 2 oxidized [2Fe-2S]-[ferredoxin] + H2O = 2 reduced [2Fe-2S]-[ferredoxin] + CO2 + 2 H(+). In terms of biological role, CODH oxidizes carbon monoxide coupled, via CooF, to the reduction of a hydrogen cation by a hydrogenase (possibly CooH). This is Carbon monoxide dehydrogenase 2 (cooS2) from Methanosarcina acetivorans (strain ATCC 35395 / DSM 2834 / JCM 12185 / C2A).